Here is a 30-residue protein sequence, read N- to C-terminus: Cyclotide hyen-G (30 aa).

Residues 1 to 30 constitute a cross-link (cyclopeptide (Gly-Asp)); sequence GLPCGESCVYIPCISTVLGCSCSNKVCYRD. Intrachain disulfides connect cysteine 4/cysteine 20, cysteine 8/cysteine 22, and cysteine 13/cysteine 27.

In terms of processing, this is a cyclic peptide. In terms of tissue distribution, detected in stems (at protein level).

In terms of biological role, probably participates in a plant defense mechanism. This chain is Cyclotide hyen-G, found in Pigea enneasperma (Spade flower).